The sequence spans 293 residues: Cyclohexadienyl dehydrogenase (293 aa).

The Prephenate/arogenate dehydrogenase domain occupies 5 to 293 (KHIAIIGLGL…ALKTDHDIRP (289 aa)). 6–30 (HIAIIGLGLIGSSAARATKAYCPDV) lines the NAD(+) pocket.

This sequence belongs to the prephenate/arogenate dehydrogenase family. In terms of assembly, homodimer.

The enzyme catalyses L-arogenate + NAD(+) = L-tyrosine + CO2 + NADH. It catalyses the reaction prephenate + NAD(+) = 3-(4-hydroxyphenyl)pyruvate + CO2 + NADH. The protein operates within amino-acid biosynthesis; L-tyrosine biosynthesis; (4-hydroxyphenyl)pyruvate from prephenate (NAD(+) route): step 1/1. It functions in the pathway amino-acid biosynthesis; L-tyrosine biosynthesis; L-tyrosine from L-arogenate (NAD(+) route): step 1/1. Insensitive to feedback inhibition by L-tyrosine. In terms of biological role, can function as either prephenate dehydrogenase or as arogenate dehydrogenase in the biosynthesis of L-tyrosine. Catalyzes two analogous reactions: converts prephenate to 4-hydroxyphenylpyruvate and transforms L-arogenate to L-tyrosine. Is not able to utilize NADP(+) instead of NAD(+) as cosubstrate. The sequence is that of Cyclohexadienyl dehydrogenase from Zymomonas mobilis subsp. mobilis (strain ATCC 31821 / ZM4 / CP4).